The chain runs to 431 residues: Histidinol dehydrogenase 1 (431 aa).

NAD(+)-binding residues include Tyr127, Gln188, and Asn211. Residues Ser234, Gln256, and His259 each coordinate substrate. Zn(2+)-binding residues include Gln256 and His259. Active-site proton acceptor residues include Glu324 and His325. Residues His325, Asp358, Glu412, and His417 each contribute to the substrate site. Asp358 serves as a coordination point for Zn(2+). A Zn(2+)-binding site is contributed by His417.

It belongs to the histidinol dehydrogenase family. The cofactor is Zn(2+).

It catalyses the reaction L-histidinol + 2 NAD(+) + H2O = L-histidine + 2 NADH + 3 H(+). Its pathway is amino-acid biosynthesis; L-histidine biosynthesis; L-histidine from 5-phospho-alpha-D-ribose 1-diphosphate: step 9/9. Its function is as follows. Catalyzes the sequential NAD-dependent oxidations of L-histidinol to L-histidinaldehyde and then to L-histidine. In Nostoc sp. (strain PCC 7120 / SAG 25.82 / UTEX 2576), this protein is Histidinol dehydrogenase 1 (hisD1).